Reading from the N-terminus, the 263-residue chain is ABC transporter I family member 17 (263 aa).

An ABC transporter domain is found at 29 to 260 (IRVHDLTRVA…THPMAQRFLQ (232 aa)). 62–69 (GPSGSGKS) lines the ATP pocket.

This sequence belongs to the ABC transporter superfamily. ABCI family.

This chain is ABC transporter I family member 17 (ABCI17), found in Arabidopsis thaliana (Mouse-ear cress).